We begin with the raw amino-acid sequence, 185 residues long: Ribosome-recycling factor (185 aa).

It belongs to the RRF family.

The protein localises to the cytoplasm. Its function is as follows. Responsible for the release of ribosomes from messenger RNA at the termination of protein biosynthesis. May increase the efficiency of translation by recycling ribosomes from one round of translation to another. This chain is Ribosome-recycling factor, found in Clavibacter sepedonicus (Clavibacter michiganensis subsp. sepedonicus).